A 687-amino-acid polypeptide reads, in one-letter code: Glycine--tRNA ligase beta subunit (687 aa).

This sequence belongs to the class-II aminoacyl-tRNA synthetase family. Tetramer of two alpha and two beta subunits.

The protein localises to the cytoplasm. The enzyme catalyses tRNA(Gly) + glycine + ATP = glycyl-tRNA(Gly) + AMP + diphosphate. The sequence is that of Glycine--tRNA ligase beta subunit from Geobacter sulfurreducens (strain ATCC 51573 / DSM 12127 / PCA).